Reading from the N-terminus, the 94-residue chain is Protein RnfH (94 aa).

Belongs to the UPF0125 (RnfH) family.

This Yersinia pestis bv. Antiqua (strain Antiqua) protein is Protein RnfH.